The chain runs to 499 residues: 2,3-bisphosphoglycerate-independent phosphoglycerate mutase (499 aa).

Positions 10 and 60 each coordinate Mn(2+). The active-site Phosphoserine intermediate is the S60. Substrate is bound by residues H121, 151–152 (RD), R182, R188, 253–256 (RPDR), and K326. 5 residues coordinate Mn(2+): D391, H395, D434, H435, and H452.

This sequence belongs to the BPG-independent phosphoglycerate mutase family. In terms of assembly, monomer. Mn(2+) is required as a cofactor.

The catalysed reaction is (2R)-2-phosphoglycerate = (2R)-3-phosphoglycerate. It participates in carbohydrate degradation; glycolysis; pyruvate from D-glyceraldehyde 3-phosphate: step 3/5. Functionally, catalyzes the interconversion of 2-phosphoglycerate and 3-phosphoglycerate. This Metamycoplasma hominis (strain ATCC 23114 / DSM 25592 / NBRC 14850 / NCTC 10111 / PG21) (Mycoplasma hominis) protein is 2,3-bisphosphoglycerate-independent phosphoglycerate mutase.